A 131-amino-acid chain; its full sequence is Profilin LP04 (131 aa).

This sequence belongs to the profilin family. As to quaternary structure, occurs in many kinds of cells as a complex with monomeric actin in a 1:1 ratio.

It localises to the cytoplasm. Its subcellular location is the cytoskeleton. Functionally, binds to actin and affects the structure of the cytoskeleton. At high concentrations, profilin prevents the polymerization of actin, whereas it enhances it at low concentrations. By binding to PIP2, it inhibits the formation of IP3 and DG. The protein is Profilin LP04 of Oryza sativa subsp. indica (Rice).